We begin with the raw amino-acid sequence, 137 residues long: Small ribosomal subunit protein uS12 (137 aa).

The segment at M1–Q26 is disordered.

It belongs to the universal ribosomal protein uS12 family. Part of the 30S ribosomal subunit. Contacts proteins S8 and S17. May interact with IF1 in the 30S initiation complex.

Functionally, with S4 and S5 plays an important role in translational accuracy. Interacts with and stabilizes bases of the 16S rRNA that are involved in tRNA selection in the A site and with the mRNA backbone. Located at the interface of the 30S and 50S subunits, it traverses the body of the 30S subunit contacting proteins on the other side and probably holding the rRNA structure together. The combined cluster of proteins S8, S12 and S17 appears to hold together the shoulder and platform of the 30S subunit. The chain is Small ribosomal subunit protein uS12 from Mycoplasmopsis pulmonis (strain UAB CTIP) (Mycoplasma pulmonis).